The following is a 219-amino-acid chain: Thymidylate kinase (219 aa).

10–17 (GLEGAGKT) contributes to the ATP binding site.

The protein belongs to the thymidylate kinase family.

The enzyme catalyses dTMP + ATP = dTDP + ADP. Its function is as follows. Phosphorylation of dTMP to form dTDP in both de novo and salvage pathways of dTTP synthesis. The chain is Thymidylate kinase from Pectobacterium carotovorum subsp. carotovorum (strain PC1).